Here is a 255-residue protein sequence, read N- to C-terminus: MVTICVIPARYGSTRFPGKPLAFLKNKPIIQHVYERAKSSKMIDEVFVATDDSRILHTVESFGGKAIMTSSKHPSGTDRIAEAVDKLLQEGYNLQESSIVINLQGDEPLIKKEMIDQLIDLMKNENDSIGTLAKRIEKEDDFFNPNIVKVVFDKNGYALYFSRSPIPFDREKFIKGFSKNNFMYKHIGIYGYNVRILKNFVGLPMSRLEEIESLEQLRALENGIKIKVGLTEYDSFGIDTPEDLEVAEKCLNTYS.

The protein belongs to the KdsB family.

The protein resides in the cytoplasm. The enzyme catalyses 3-deoxy-alpha-D-manno-oct-2-ulosonate + CTP = CMP-3-deoxy-beta-D-manno-octulosonate + diphosphate. Its pathway is nucleotide-sugar biosynthesis; CMP-3-deoxy-D-manno-octulosonate biosynthesis; CMP-3-deoxy-D-manno-octulosonate from 3-deoxy-D-manno-octulosonate and CTP: step 1/1. It functions in the pathway bacterial outer membrane biogenesis; lipopolysaccharide biosynthesis. In terms of biological role, activates KDO (a required 8-carbon sugar) for incorporation into bacterial lipopolysaccharide in Gram-negative bacteria. The polypeptide is 3-deoxy-manno-octulosonate cytidylyltransferase (Thermodesulfovibrio yellowstonii (strain ATCC 51303 / DSM 11347 / YP87)).